Here is a 376-residue protein sequence, read N- to C-terminus: tRNA (guanine(26)-N(2))-dimethyltransferase (376 aa).

Residues 4-373 enclose the Trm1 methyltransferase domain; the sequence is VAVKEGLARI…APFGVVAEVM (370 aa). S-adenosyl-L-methionine-binding residues include Arg-36, Arg-61, Asp-78, Asp-120, and Ala-121.

Belongs to the class I-like SAM-binding methyltransferase superfamily. Trm1 family.

The catalysed reaction is guanosine(26) in tRNA + 2 S-adenosyl-L-methionine = N(2)-dimethylguanosine(26) in tRNA + 2 S-adenosyl-L-homocysteine + 2 H(+). Functionally, dimethylates a single guanine residue at position 26 of a number of tRNAs using S-adenosyl-L-methionine as donor of the methyl groups. This chain is tRNA (guanine(26)-N(2))-dimethyltransferase, found in Thermococcus kodakarensis (strain ATCC BAA-918 / JCM 12380 / KOD1) (Pyrococcus kodakaraensis (strain KOD1)).